Consider the following 516-residue polypeptide: Phosphatidylserine decarboxylase proenzyme 2, mitochondrial (516 aa).

The N-terminal 21 residues, 1–21 (MRPRQRFRRFHPRWSKVNLRG), are a transit peptide targeting the mitochondrion. Residues 22 to 33 (FGGVGALKGVKA) are Mitochondrial matrix-facing. Residues 34–52 (LNGMNVRVSMRLKWISNRI) traverse the membrane as a helical segment. Topologically, residues 53-516 (HRIRRSRRLG…GQYVRVGEAL (464 aa)) are mitochondrial intermembrane. Residues Asp-159, His-373, and Ser-488 each act as charge relay system; for autoendoproteolytic cleavage activity in the active site. The Schiff-base intermediate with substrate; via pyruvic acid; for decarboxylase activity role is filled by Ser-488. Residue Ser-488 is modified to Pyruvic acid (Ser); by autocatalysis.

The protein belongs to the phosphatidylserine decarboxylase family. PSD-B subfamily. Eukaryotic type I sub-subfamily. Heterodimer of a large membrane-associated beta subunit and a small pyruvoyl-containing alpha subunit. Pyruvate is required as a cofactor. In terms of processing, is synthesized initially as an inactive proenzyme. Formation of the active enzyme involves a self-maturation process in which the active site pyruvoyl group is generated from an internal serine residue via an autocatalytic post-translational modification. Two non-identical subunits are generated from the proenzyme in this reaction, and the pyruvate is formed at the N-terminus of the alpha chain, which is derived from the carboxyl end of the proenzyme. The autoendoproteolytic cleavage occurs by a canonical serine protease mechanism, in which the side chain hydroxyl group of the serine supplies its oxygen atom to form the C-terminus of the beta chain, while the remainder of the serine residue undergoes an oxidative deamination to produce ammonia and the pyruvoyl prosthetic group on the alpha chain. During this reaction, the Ser that is part of the protease active site of the proenzyme becomes the pyruvoyl prosthetic group, which constitutes an essential element of the active site of the mature decarboxylase.

The protein localises to the mitochondrion. It localises to the mitochondrion inner membrane. The protein resides in the nucleus envelope. Its subcellular location is the lipid droplet. It is found in the endoplasmic reticulum membrane. It catalyses the reaction a 1,2-diacyl-sn-glycero-3-phospho-L-serine + H(+) = a 1,2-diacyl-sn-glycero-3-phosphoethanolamine + CO2. It functions in the pathway phospholipid metabolism; phosphatidylethanolamine biosynthesis; phosphatidylethanolamine from CDP-diacylglycerol: step 2/2. Catalyzes the formation of phosphatidylethanolamine (PtdEtn) from phosphatidylserine (PtdSer). Plays a central role in phospholipid metabolism and in the interorganelle trafficking of phosphatidylserine. Together with psd1 and psd3, responsible for the majority of phosphatidylethanolamine synthesis. Plays a role in lipid droplet biogenesis at the endoplasmic reticulum membrane. The chain is Phosphatidylserine decarboxylase proenzyme 2, mitochondrial from Schizosaccharomyces pombe (strain 972 / ATCC 24843) (Fission yeast).